We begin with the raw amino-acid sequence, 224 residues long: COMM domain-containing protein 5 (224 aa).

N-acetylserine is present on Ser2. The COMM domain occupies 151 to 215; that stretch reads HVADFRWRVD…LVLKEMADLE (65 aa).

The protein belongs to the COMM domain-containing protein 5 family. Component of the commander complex consisting of the CCC subcomplex and the retriever subcomplex. Component of the CCC (COMMD/CCDC22/CCDC93) subcomplex consisting of COMMD1, COMMD2, COMMD3, COMMD4, COMMD5, COMMD6, COMMD7, COMMD8, COMMD9, COMMD10, CCDC22 and CCDC93; within the complex forms a heterodimer with COMMD10. Interacts (via COMM domain) with COMMD1 (via COMM domain). Interacts with RELA, RELB, NFKB1/p105. Interacts with CCDC22, CCDC93, SCNN1B, CUL2, CUL3, CUL4A, CUL4B, CUL7. As to expression, highly expressed in heart, stomach, jejunum, kidney, liver, and adrenal gland. Expression was generally higher in adult organs than in fetal tissues, particularly in heart, kidney, and liver.

It is found in the cytoplasm. Its subcellular location is the nucleus. In terms of biological role, scaffold protein in the commander complex that is essential for endosomal recycling of transmembrane cargos; the commander complex is composed of the CCC subcomplex and the retriever subcomplex. May modulate activity of cullin-RING E3 ubiquitin ligase (CRL) complexes. Negatively regulates cell proliferation. Negatively regulates cell cycle G2/M phase transition probably by transactivating p21/CDKN1A through the p53/TP53-independent signaling pathway. Involved in kidney proximal tubule morphogenesis. Down-regulates activation of NF-kappa-B. This chain is COMM domain-containing protein 5 (COMMD5), found in Homo sapiens (Human).